We begin with the raw amino-acid sequence, 303 residues long: Hydroxyacylglutathione hydrolase, mitochondrial (303 aa).

Residues histidine 97, histidine 99, aspartate 101, histidine 102, histidine 153, and aspartate 177 each coordinate Zn(2+). Substrate contacts are provided by residues 186-188, 216-218, and 292-295; these read KFF, HEY, and RKEK. A Zn(2+)-binding site is contributed by histidine 216.

The protein belongs to the metallo-beta-lactamase superfamily. Glyoxalase II family. As to quaternary structure, monomer. Zn(2+) serves as cofactor.

The protein localises to the mitochondrion matrix. It is found in the cytoplasm. It catalyses the reaction an S-(2-hydroxyacyl)glutathione + H2O = a 2-hydroxy carboxylate + glutathione + H(+). It carries out the reaction (R)-S-lactoylglutathione + H2O = (R)-lactate + glutathione + H(+). Thiolesterase that catalyzes the hydrolysis of S-D-lactoyl-glutathione to form glutathione and D-lactic acid. The sequence is that of Hydroxyacylglutathione hydrolase, mitochondrial (hagh) from Danio rerio (Zebrafish).